Reading from the N-terminus, the 512-residue chain is NAD(P)H-quinone oxidoreductase chain 4, chloroplastic (512 aa).

The next 14 helical transmembrane spans lie at 4-24, 34-54, 87-107, 111-131, 134-154, 167-187, 208-228, 242-262, 274-294, 308-328, 330-350, 374-396, 417-437, and 462-482; these read VPWL…IPLL, WYAL…FGCY, IGLI…AWPV, PKLF…LFAS, ILLF…LLSM, FILY…TASL, GLEI…LPAF, HYST…YGFI, TVFA…AALV, SSVS…DLGL, GAML…FLAG, MFAM…GFVS, IITL…LSMV, and VFVL…PNFA.

This sequence belongs to the complex I subunit 4 family.

The protein resides in the plastid. Its subcellular location is the chloroplast thylakoid membrane. It catalyses the reaction a plastoquinone + NADH + (n+1) H(+)(in) = a plastoquinol + NAD(+) + n H(+)(out). It carries out the reaction a plastoquinone + NADPH + (n+1) H(+)(in) = a plastoquinol + NADP(+) + n H(+)(out). The polypeptide is NAD(P)H-quinone oxidoreductase chain 4, chloroplastic (Zygnema circumcarinatum (Green alga)).